We begin with the raw amino-acid sequence, 71 residues long: Conotoxin Bu24 (71 aa).

The N-terminal stretch at 1–21 (MGMRMMVTVFLLVVLATTVVS) is a signal peptide. Positions 22-44 (LRSNRASDGRRGIVNKLNDLVPK) are excised as a propeptide. Position 70 is an asparagine amide (asparagine 70).

The protein belongs to the conotoxin A superfamily. Post-translationally, contains 3 disulfide bonds. They are not indicated here, since framework IV presents two different connectivities (I-V, II-III, IV-VI and I-III, II-V, IV-VI). In terms of tissue distribution, expressed by the venom duct.

Its subcellular location is the secreted. This Conus bullatus (Bubble cone) protein is Conotoxin Bu24.